A 177-amino-acid polypeptide reads, in one-letter code: Large ribosomal subunit protein uL6 (177 aa).

A compositionally biased stretch (basic and acidic residues) spans 154 to 171 (PEPYKGKGVRYADEQVRR). The segment at 154–177 (PEPYKGKGVRYADEQVRRKEAKKK) is disordered.

This sequence belongs to the universal ribosomal protein uL6 family. In terms of assembly, part of the 50S ribosomal subunit.

Functionally, this protein binds to the 23S rRNA, and is important in its secondary structure. It is located near the subunit interface in the base of the L7/L12 stalk, and near the tRNA binding site of the peptidyltransferase center. The protein is Large ribosomal subunit protein uL6 of Marinobacter nauticus (strain ATCC 700491 / DSM 11845 / VT8) (Marinobacter aquaeolei).